Reading from the N-terminus, the 199-residue chain is MNKLANGPNYKVKPRRRREGKTNYYKRYVYVISKQTRFIVRITNKYVIVQIAKIDPKGDIMIASAHSAELAKKFGWKGDENNTPAAYLTGYLAGLRAIKRGVTECVADIGLHVPSKGNRVFYVIKGAIDAGLKIPIGDISIENDRIKGEHIAKYAEKLKSENSDLYSKLFSRYLQRGLNPENLPSHFEEILNKIKSSGG.

The protein belongs to the universal ribosomal protein uL18 family. Part of the 50S ribosomal subunit. Contacts the 5S and 23S rRNAs.

Functionally, this is one of the proteins that bind and probably mediate the attachment of the 5S RNA into the large ribosomal subunit, where it forms part of the central protuberance. This is Large ribosomal subunit protein uL18 from Saccharolobus solfataricus (strain ATCC 35092 / DSM 1617 / JCM 11322 / P2) (Sulfolobus solfataricus).